Here is a 281-residue protein sequence, read N- to C-terminus: Ermin (281 aa).

Polar residues-rich tracts occupy residues 1–12 (MTDTPETLSGTE), 21–31 (NGQQPSSQTRQ), and 135–147 (AQQQLEQRGDAST). Disordered regions lie at residues 1 to 80 (MTDT…KILN), 110 to 147 (REGHPWKKIPPNSSNLEVSRQKERTAQQQLEQRGDAST), and 167 to 248 (KCDE…GDIA). Acidic residues predominate over residues 169 to 197 (DEEEEEEEEVWNEEINEEDVDECAEEEDE). A compositionally biased stretch (basic and acidic residues) spans 198–223 (VRVIEFKRKHREGSPLKEESLAREDS). S211, S223, S227, and S230 each carry phosphoserine. T234 is modified (phosphothreonine). Positions 262 to 281 (KIRKGNTKQRIDEFESMMHL) are binds actin.

Binds actin. Brain and spinal cord. Exclusively expressed by the oligodendrocytes. Appears at a late stage during myelination, and in the mature nerves, it is localized to the outer cytoplasmic lip of the myelin sheath and the paranodal loops.

Its subcellular location is the cytoplasm. It is found in the cytoskeleton. Plays a role in cytoskeletal rearrangements during the late wrapping and/or compaction phases of myelinogenesis as well as in maintenance and stability of myelin sheath in the adult. May play an important role in late-stage oligodendroglia maturation, myelin/Ranvier node formation during CNS development, and in the maintenance and plasticity of related structures in the mature CNS. This chain is Ermin (Ermn), found in Mus musculus (Mouse).